The primary structure comprises 58 residues: Preprotein translocase subunit SecG (58 aa).

Topologically, residues 1-33 (MARRKKYEGLNPFVAAGLIKFSEEGEMERIKLS) are cytoplasmic. Residues 34-55 (PKAAIAVSAAIIAALIIINLLL) traverse the membrane as a helical segment. Residues 56-58 (PPL) are Extracellular-facing.

The protein belongs to the SEC61-beta family. Component of the protein translocase complex. Heterotrimer consisting of alpha (SecY), beta (SecG) and gamma (SecE) subunits. Can form oligomers of the heterotrimer.

Its subcellular location is the cell membrane. Its function is as follows. Involved in protein export. The function of the beta subunit is unknown, but it may be involved in stabilization of the trimeric complex. The sequence is that of Preprotein translocase subunit SecG from Pyrobaculum arsenaticum (strain DSM 13514 / JCM 11321 / PZ6).